The following is a 525-amino-acid chain: Vesicular inhibitory amino acid transporter (525 aa).

Topologically, residues 1–132 (MATLLRSKLS…WNVTNAIQGM (132 aa)) are cytoplasmic. Residues 83–107 (IHYQRGSGAPLPPSGSKDQVGGGGE) are disordered. Residues 133–153 (FVLGLPYAILHGGYLGLFLII) form a helical membrane-spanning segment. The Lumenal, vesicle segment spans residues 154–204 (FAAVVCCYTGKILIACLYEENEDGEVVRVRDSYVAIANACCAPRFPTLGGR). The residue at position 186 (Tyr186) is a 3'-nitrotyrosine. The helical transmembrane segment at 205-225 (VVNVAQIIELVMTCILYVVVS) threads the bilayer. The Cytoplasmic segment spans residues 226–265 (GNLMYNSFPGLPVSQKSWSIIATAVLLPCAFLKNLKAVSK). The chain crosses the membrane as a helical span at residues 266-286 (FSLLCTLAHFVINILVIAYCL). At 287–305 (SRARDWAWEKVKFYIDVKK) the chain is on the lumenal, vesicle side. Residues 306-326 (FPISIGIIVFSYTSQIFLPSL) form a helical membrane-spanning segment. Topologically, residues 327 to 341 (EGNMQQPSEFHCMMN) are cytoplasmic. A helical transmembrane segment spans residues 342–362 (WTHIAACVLKGLFALVAYLTW). Residues 363-383 (ADETKEVITDNLPGSIRAVVN) lie on the Lumenal, vesicle side of the membrane. Residues 384–404 (IFLVAKALLSYPLPFFAAVEV) form a helical membrane-spanning segment. Residues 405–438 (LEKSLFQEGSRAFFPACYSGDGRLKSWGLTLRCA) are Cytoplasmic-facing. A helical membrane pass occupies residues 439-459 (LVVFTLLMAIYVPHFALLMGL). Residues 460-461 (TG) are Lumenal, vesicle-facing. A helical membrane pass occupies residues 462-482 (SLTGAGLCFLLPSLFHLRLLW). Over 483-489 (RKLLWHQ) the chain is Cytoplasmic. A helical membrane pass occupies residues 490 to 510 (VFFDVAIFVIGGICSVSGFVH). Topologically, residues 511-525 (SLEGLIEAYRTNAED) are lumenal, vesicle.

Belongs to the amino acid/polyamine transporter 2 family. As to expression, retina. Expressed throughout the horizontal cells or more specifically at the terminals.

The protein resides in the cytoplasmic vesicle membrane. It is found in the presynapse. It carries out the reaction 4-aminobutanoate(out) + n H(+)(in) = 4-aminobutanoate(in) + n H(+)(out). The catalysed reaction is glycine(out) + n H(+)(in) = glycine(in) + n H(+)(out). The enzyme catalyses beta-alanine(out) + n H(+)(in) = beta-alanine(in) + n H(+)(out). Its function is as follows. Antiporter that exchanges vesicular protons for cytosolic 4-aminobutanoate or to a lesser extend glycine, thus allowing their secretion from nerve terminals. The transport is equally dependent on the chemical and electrical components of the proton gradient. May also transport beta-alanine. Acidification of GABAergic synaptic vesicles is a prerequisite for 4-aminobutanoate uptake. The chain is Vesicular inhibitory amino acid transporter from Homo sapiens (Human).